Here is a 544-residue protein sequence, read N- to C-terminus: Zinc finger and BTB domain-containing protein 7B (544 aa).

Residues 34 to 115 enclose the BTB domain; the sequence is CDLTIRTQGL…AYTATLTTSS (82 aa). Ser150 is modified (phosphoserine). 2 disordered regions span residues 171-221 and 244-314; these read TTAS…ARAN and GRLG…EDPI. Residues 186–200 are compositionally biased toward pro residues; the sequence is PQVPLLPPPPPPPRP. Residues 201–210 show a composition bias toward basic residues; that stretch reads VARRSRKPRK. Lys210 and Lys216 each carry N6-acetyllysine; by EP300; alternate. Residues Lys210 and Lys216 each participate in a glycyl lysine isopeptide (Lys-Gly) (interchain with G-Cter in ubiquitin); alternate cross-link. Over residues 277–286 the composition is skewed to acidic residues; it reads FEGEEEEEEM. Lys339 carries the post-translational modification N6-acetyllysine; by EP300; alternate. Residue Lys339 forms a Glycyl lysine isopeptide (Lys-Gly) (interchain with G-Cter in ubiquitin); alternate linkage. Positions 348 to 404 are required for interaction with and acetylation by EP300; that stretch reads MPQECPVCHKIIHGAGKLPRHMRTHTGEKPFACEVCGVRFTRNDKLKIHMRKHTGER. The C2H2-type 1 zinc finger occupies 350–372; the sequence is QECPVCHKIIHGAGKLPRHMRTH. Position 373 is a phosphothreonine (Thr373). 2 consecutive C2H2-type zinc fingers follow at residues 378-400 and 406-428; these read FACE…MRKH and YSCP…MHLH. The C2H2-type 4; atypical zinc-finger motif lies at 434 to 458; it reads YECHLCHKAFAKEDHLQRHLKGQNC. Disordered regions lie at residues 465-493 and 507-544; these read RRRK…DLSN and WEQS…MESS. Composition is skewed to low complexity over residues 511 to 522 and 531 to 544; these read ATTGPPVTTQGP and TPTT…MESS.

In terms of assembly, homodimerizes. Interacts with NCL, NEDD4 and YBX1. Interacts with HNRNPU (via RNA-binding RGG-box region); the interaction facilitates the recruitment of long non-coding RNA Blnc1 by ZBTB7B. Interacts with HDAC4 and HDAC5; the interaction allows the recruitment of HDAC4 and HDAC5 on CD8 loci for deacetylation and possible inhibition of CD8 genes expression. In terms of processing, acetylated directly and specifically by EP300. EP300-mediated acetylation of Lys-210, Lys-216 and Lys-339 stabilizes the protein by antagonizing ubiquitin conjugation. Post-translationally, ubiquitinated, leading to proteasomal degradation. Competes with acetylation on Lys-210, Lys-216 and Lys-339. Widely expressed, with a higher level in skin. Expressed in thymus. Restricted to CD4 cells (mature single positive CD4(+) and intermediate CD4(+)CD8(+) cells). Expressed in the luminal epithelial cells in the mammary glands where is up-regulated at late pregnancy and lactation. Expression is enriched in brown fat.

Its subcellular location is the nucleus. In terms of biological role, transcription regulator that acts as a key regulator of lineage commitment of immature T-cell precursors. Exerts distinct biological functions in the mammary epithelial cells and T cells in a tissue-specific manner. Necessary and sufficient for commitment of CD4 lineage, while its absence causes CD8 commitment. Development of immature T-cell precursors (thymocytes) to either the CD4 helper or CD8 killer T-cell lineages correlates precisely with their T-cell receptor specificity for major histocompatibility complex class II or class I molecules, respectively. Cross-antagonism between ZBTB7B and CBF complexes are determinative to CD4 versus CD8 cell fate decision. Suppresses RUNX3 expression and imposes CD4+ lineage fate by inducing the SOCS suppressors of cytokine signaling. induces, as a transcriptional activator, SOCS genes expression which represses RUNX3 expression and promotes the CD4+ lineage fate. During CD4 lineage commitment, associates with multiple sites at the CD8 locus, acting as a negative regulator of the CD8 promoter and enhancers by epigenetic silencing through the recruitment of class II histone deacetylases, such as HDAC4 and HDAC5, to these loci. Regulates the development of IL17-producing CD1d-restricted naural killer (NK) T cells. Also functions as an important metabolic regulator in the lactating mammary glands. Critical feed-forward regulator of insulin signaling in mammary gland lactation, directly regulates expression of insulin receptor substrate-1 (IRS-1) and insulin-induced Akt-mTOR-SREBP signaling. Transcriptional repressor of the collagen COL1A1 and COL1A2 genes. May also function as a repressor of fibronectin and possibly other extracellular matrix genes. Potent driver of brown fat development, thermogenesis and cold-induced beige fat formation. Recruits the brown fat lncRNA 1 (Blnc1):HNRNPU ribonucleoprotein complex to activate thermogenic gene expression in brown and beige adipocytes. The sequence is that of Zinc finger and BTB domain-containing protein 7B from Mus musculus (Mouse).